The following is a 446-amino-acid chain: RUN domain-containing protein 3A (446 aa).

The interval 1-298 (METSFVQTTM…LQLQLEEAAA (298 aa)) is interaction with RAP2A. One can recognise an RUN domain in the interval 52-189 (DDSSEEFVNF…IDFSFCLKGE (138 aa)). T215 carries the post-translational modification Phosphothreonine. Positions 216–239 (DEEERHSAESSTSEDNSPEHPYLP) are disordered. Phosphoserine is present on S232. Positions 267–322 (YLEELVRLRESQLKDLEAENRRLQLQLEEAAAQNQREKRELEGVILELQEQLTGLI) form a coiled coil. The segment covering 372–384 (PLSAEASLSSDSQ) has biased composition (polar residues). The tract at residues 372 to 404 (PLSAEASLSSDSQRLGEGTRDEEPWGPIGKDPT) is disordered. Residues S416 and S419 each carry the phosphoserine modification.

This sequence belongs to the RUNDC3 family. In terms of assembly, interacts with the GTP-bound form of RAP2A.

May act as an effector of RAP2A in neuronal cells. The polypeptide is RUN domain-containing protein 3A (RUNDC3A) (Pongo abelii (Sumatran orangutan)).